We begin with the raw amino-acid sequence, 366 residues long: tRNA-specific 2-thiouridylase MnmA (366 aa).

ATP contacts are provided by residues alanine 6–serine 13 and leucine 32. The active-site Nucleophile is the cysteine 101. Cysteine 101 and cysteine 199 are disulfide-bonded. ATP is bound at residue glycine 125. Residues lysine 148–glutamine 150 form an interaction with tRNA region. The active-site Cysteine persulfide intermediate is the cysteine 199.

The protein belongs to the MnmA/TRMU family.

The protein resides in the cytoplasm. It catalyses the reaction S-sulfanyl-L-cysteinyl-[protein] + uridine(34) in tRNA + AH2 + ATP = 2-thiouridine(34) in tRNA + L-cysteinyl-[protein] + A + AMP + diphosphate + H(+). In terms of biological role, catalyzes the 2-thiolation of uridine at the wobble position (U34) of tRNA, leading to the formation of s(2)U34. This chain is tRNA-specific 2-thiouridylase MnmA, found in Leifsonia xyli subsp. xyli (strain CTCB07).